The following is a 125-amino-acid chain: Photosystem II extrinsic protein U (125 aa).

A signal peptide spans 1-29; that stretch reads MKRLLSWLTGLVVMAGLLFSLATPSGVQA.

This sequence belongs to the PsbU family. In terms of assembly, PSII is composed of 1 copy each of membrane proteins PsbA, PsbB, PsbC, PsbD, PsbE, PsbF, PsbH, PsbI, PsbJ, PsbK, PsbL, PsbM, PsbT, PsbX, PsbY, PsbZ, Psb30/Ycf12, peripheral proteins PsbO, CyanoQ (PsbQ), PsbU, PsbV and a large number of cofactors. It forms dimeric complexes.

It is found in the cellular thylakoid membrane. One of the extrinsic, lumenal subunits of photosystem II (PSII). PSII is a light-driven water plastoquinone oxidoreductase, using light energy to abstract electrons from H(2)O, generating a proton gradient subsequently used for ATP formation. The extrinsic proteins stabilize the structure of photosystem II oxygen-evolving complex (OEC), the ion environment of oxygen evolution and protect the OEC against heat-induced inactivation. This chain is Photosystem II extrinsic protein U, found in Synechococcus sp. (strain WH7803).